Consider the following 313-residue polypeptide: ADP-L-glycero-D-manno-heptose-6-epimerase (313 aa).

NADP(+)-binding positions include 10 to 11, 31 to 32, K38, K53, 75 to 79, and N92; these read MI, DN, and EGACS. Y139 (proton acceptor) is an active-site residue. K143 lines the NADP(+) pocket. N174 contacts substrate. NADP(+) contacts are provided by V175 and K183. K183 (proton acceptor) is an active-site residue. Substrate contacts are provided by residues S185, H192, 206–209, R214, and Y277; that span reads FEGS.

This sequence belongs to the NAD(P)-dependent epimerase/dehydratase family. HldD subfamily. As to quaternary structure, homopentamer. The cofactor is NADP(+).

It carries out the reaction ADP-D-glycero-beta-D-manno-heptose = ADP-L-glycero-beta-D-manno-heptose. It functions in the pathway nucleotide-sugar biosynthesis; ADP-L-glycero-beta-D-manno-heptose biosynthesis; ADP-L-glycero-beta-D-manno-heptose from D-glycero-beta-D-manno-heptose 7-phosphate: step 4/4. Its function is as follows. Catalyzes the interconversion between ADP-D-glycero-beta-D-manno-heptose and ADP-L-glycero-beta-D-manno-heptose via an epimerization at carbon 6 of the heptose. The polypeptide is ADP-L-glycero-D-manno-heptose-6-epimerase (Aliivibrio fischeri (strain MJ11) (Vibrio fischeri)).